Consider the following 231-residue polypeptide: MRLVIARCSVTYEGRLNAHLPTATRLLMVKADGSVLVHSDGGSYKPLNWMSPPATLHVEEPSPDQADQGVTQVWRVQAKKSDDRLIVLIEEVLADDSHELGVDPGLVKDGVEADLQRLLAEQISLLGDGHTLVRREYMTAIGPVDILARDADGGTVAVELKRRGDIDGVEQLTRYLELMNRDPLLAPVRGVFAAQQIKPQARTLAEDRGIRCVTLDYDAMRGVDDAESRLF.

The protein belongs to the NucS endonuclease family.

Its subcellular location is the cytoplasm. Its function is as follows. Cleaves both 3' and 5' ssDNA extremities of branched DNA structures. This is Endonuclease NucS from Micrococcus luteus (strain ATCC 4698 / DSM 20030 / JCM 1464 / CCM 169 / CCUG 5858 / IAM 1056 / NBRC 3333 / NCIMB 9278 / NCTC 2665 / VKM Ac-2230) (Micrococcus lysodeikticus).